We begin with the raw amino-acid sequence, 20 residues long: Agglutinin beta-3 chain (20 aa).

Residues 1–20 (GPNGKSQSIIVGPWGDRVTN) are disordered.

The protein belongs to the jacalin lectin family. As to quaternary structure, formed of four alpha chains and four beta chains.

D-galactose-specific lectin, binds the T-antigen structure Gal-beta1,3-GalNAc. This chain is Agglutinin beta-3 chain, found in Maclura pomifera (Osage orange).